Here is a 421-residue protein sequence, read N- to C-terminus: Enolase (421 aa).

Gln165 provides a ligand contact to (2R)-2-phosphoglycerate. The active-site Proton donor is Glu207. 3 residues coordinate Mg(2+): Asp244, Glu285, and Asp312. Lys337, Arg366, Ser367, and Lys388 together coordinate (2R)-2-phosphoglycerate. Lys337 (proton acceptor) is an active-site residue.

It belongs to the enolase family. It depends on Mg(2+) as a cofactor.

Its subcellular location is the cytoplasm. It localises to the secreted. It is found in the cell surface. It carries out the reaction (2R)-2-phosphoglycerate = phosphoenolpyruvate + H2O. It participates in carbohydrate degradation; glycolysis; pyruvate from D-glyceraldehyde 3-phosphate: step 4/5. Functionally, catalyzes the reversible conversion of 2-phosphoglycerate (2-PG) into phosphoenolpyruvate (PEP). It is essential for the degradation of carbohydrates via glycolysis. The chain is Enolase from Ehrlichia ruminantium (strain Welgevonden).